An 87-amino-acid chain; its full sequence is Putative regulatory protein BCQ_3657 (87 aa).

The protein belongs to the RemA family.

The polypeptide is Putative regulatory protein BCQ_3657 (Bacillus cereus (strain Q1)).